The primary structure comprises 202 residues: Josephin-1 (202 aa).

Ser15 carries the phosphoserine modification. One can recognise a Josephin domain in the interval 23–202; the sequence is PPQIYHEKQR…EAHQSWRADV (180 aa). The Nucleophile role is filled by Cys36. His139 (proton acceptor) is an active-site residue.

As to quaternary structure, interacts with beta-actin/ACTB. Post-translationally, monoubiquitinated. Ubiquitination activates deubiquitination activity in vitro.

The protein localises to the cell membrane. Its subcellular location is the cytoplasm. It carries out the reaction Thiol-dependent hydrolysis of ester, thioester, amide, peptide and isopeptide bonds formed by the C-terminal Gly of ubiquitin (a 76-residue protein attached to proteins as an intracellular targeting signal).. Functionally, deubiquitinates monoubiquitinated probes (in vitro). When ubiquitinated, cleaves 'Lys-63'-linked and 'Lys-48'-linked poly-ubiquitin chains (in vitro), hence may act as a deubiquitinating enzyme. May increase macropinocytosis and suppress clathrin- and caveolae-mediated endocytosis. May enhance membrane dynamics and cell motility independently of its catalytic activity. In Bos taurus (Bovine), this protein is Josephin-1 (JOSD1).